The primary structure comprises 524 residues: MSDTYLVAASGLAVCFFVLYLLRPKTALPPGPPKLPLIGNLHQLGKKPMYERCQEWHRQFGKLISLKLGFDNVVVIGSSQIARDLLDKKGAMYSSRPKFVMAHENVTKGFHTATLPYGPRWRLHNRMQLSVLNKRIVTRCRQVQEFESLQLIHELLFTNDFHPRFQRWANSLQTGLGYGQRLAKGDECNIHEMEHISRVFREIFATGTWLVDLFPALNHLPPLLAPWKGVAEQHYNRTIELFQLNTAAALSKTSWNWTKKIRSLTESQGLPPDEVNFLVGVMAEAGGDTTGVVLDMFTLAAALHPEKMAIAQKEIDTVVGTDRLPNFGDVDKLPYLAALIKECLRWHPAAPFGLPHSVMQDDTYDGYHIPAGTTIIASQWSINFDPETFPNPYEFRPERYLENPDLPISSFGFGRRACPGRYFAMDSLFISISRVLWTFNIRPIKQGKDDPPMPAWEFVMDGALLRPAPFKALFSARDIHRQRFVIKEWAAAEKSVDVEALYDAIEPAGGDFSAQEKEEPVLVA.

Residues 2–22 (SDTYLVAASGLAVCFFVLYLL) traverse the membrane as a helical segment. A heme-binding site is contributed by Cys418.

This sequence belongs to the cytochrome P450 family. It depends on heme as a cofactor.

The protein localises to the membrane. It participates in secondary metabolite biosynthesis; terpenoid biosynthesis. Functionally, cytochrome P450 monooxygenase; part of the gene cluster that mediates the biosynthesis of various drimane-type sesquiterpene esters, compounds that exhibit diverse biological activities and are widely present in eukaryotes. The pathway begins with the synthesis of the backbone drimenol by the terpene cyclase drtB using farnesyl pyrophosphate (FPP) as substrate. The cytochrome P450 monooxygenase drtD is then responsible for the hydroxylations at C-6, C-9 and C-12, as well as the oxidation of hydroxyl groups at C-6 and C-11 to a ketone and an aldehyde, respectively. Then, the biosynthesis can go in two directions, either the hydroxylated drimenol is further hydroxylated at C-2 and C-3 by an enzyme(s) not associated with the drt cluster, or the FAD-binding oxidoreductase drtC further oxidizes C-11 or C-12 to form the butyrolactone ring. DrtB, drtD and drtC are solely responsible for the formation of the different drimane structures observed during drimane sesquiterpenes biosynthesis. The polyketide synthase drtA synthesizes different lengths (C6 and C8) of PKS chains, which are then oxidized to varying degrees by the short-chain dehydrogenase drtF. Finally, these PKS chains are transferred onto drimane sesquiterpenes by the acyltransferase drtE, forming the sesquiterpene esters. In addition to the different fatty acyl-CoA chains produced by drtA, drtE is also able to use cinnamoyl-CoA as a substrate. This chain is Cytochrome P450 monooxygenase drtD, found in Aspergillus calidoustus.